Consider the following 151-residue polypeptide: 3-hydroxyacyl-[acyl-carrier-protein] dehydratase FabZ (151 aa).

The active site involves histidine 54.

Belongs to the thioester dehydratase family. FabZ subfamily.

Its subcellular location is the cytoplasm. The catalysed reaction is a (3R)-hydroxyacyl-[ACP] = a (2E)-enoyl-[ACP] + H2O. Its function is as follows. Involved in unsaturated fatty acids biosynthesis. Catalyzes the dehydration of short chain beta-hydroxyacyl-ACPs and long chain saturated and unsaturated beta-hydroxyacyl-ACPs. This Pectobacterium atrosepticum (strain SCRI 1043 / ATCC BAA-672) (Erwinia carotovora subsp. atroseptica) protein is 3-hydroxyacyl-[acyl-carrier-protein] dehydratase FabZ.